The sequence spans 347 residues: G-protein coupled receptor homolog U12 (347 aa).

The next 6 membrane-spanning stretches (helical) occupy residues glycine 36–tyrosine 56, phenylalanine 67–threonine 87, leucine 103–threonine 124, isoleucine 147–threonine 167, isoleucine 194–isoleucine 214, and isoleucine 236–isoleucine 256. Cysteine 101 and cysteine 176 form a disulfide bridge. A disordered region spans residues glutamine 321–leucine 347. The segment covering lysine 322–valine 341 has biased composition (basic and acidic residues).

The protein belongs to the G-protein coupled receptor 1 family.

It is found in the membrane. Its function is as follows. Probable G-protein coupled receptor. The sequence is that of G-protein coupled receptor homolog U12 (U12) from Homo sapiens (Human).